Consider the following 122-residue polypeptide: NADPH-dependent 7-cyano-7-deazaguanine reductase (122 aa).

Catalysis depends on C34, which acts as the Thioimide intermediate. The active-site Proton donor is D41. Substrate-binding positions include 56–58 (VEL) and 75–76 (HE).

This sequence belongs to the GTP cyclohydrolase I family. QueF type 1 subfamily.

It localises to the cytoplasm. The catalysed reaction is 7-aminomethyl-7-carbaguanine + 2 NADP(+) = 7-cyano-7-deazaguanine + 2 NADPH + 3 H(+). Its pathway is tRNA modification; tRNA-queuosine biosynthesis. Catalyzes the NADPH-dependent reduction of 7-cyano-7-deazaguanine (preQ0) to 7-aminomethyl-7-deazaguanine (preQ1). This is NADPH-dependent 7-cyano-7-deazaguanine reductase from Anaeromyxobacter dehalogenans (strain 2CP-1 / ATCC BAA-258).